Here is a 233-residue protein sequence, read N- to C-terminus: Large ribosomal subunit protein uL1 (233 aa).

The protein belongs to the universal ribosomal protein uL1 family. As to quaternary structure, part of the 50S ribosomal subunit.

Its function is as follows. Binds directly to 23S rRNA. The L1 stalk is quite mobile in the ribosome, and is involved in E site tRNA release. Protein L1 is also a translational repressor protein, it controls the translation of the L11 operon by binding to its mRNA. This chain is Large ribosomal subunit protein uL1, found in Vibrio parahaemolyticus serotype O3:K6 (strain RIMD 2210633).